The primary structure comprises 196 residues: dITP/XTP pyrophosphatase (196 aa).

Position 10 to 15 (10 to 15) interacts with substrate; sequence SGNKGK. Mg(2+)-binding residues include Glu-40 and Asp-69. Asp-69 serves as the catalytic Proton acceptor. Substrate-binding positions include Ser-70, 147 to 150, Lys-170, and 175 to 176; these read FGYD and HR.

The protein belongs to the HAM1 NTPase family. As to quaternary structure, homodimer. It depends on Mg(2+) as a cofactor.

The enzyme catalyses XTP + H2O = XMP + diphosphate + H(+). The catalysed reaction is dITP + H2O = dIMP + diphosphate + H(+). It catalyses the reaction ITP + H2O = IMP + diphosphate + H(+). In terms of biological role, pyrophosphatase that catalyzes the hydrolysis of nucleoside triphosphates to their monophosphate derivatives, with a high preference for the non-canonical purine nucleotides XTP (xanthosine triphosphate), dITP (deoxyinosine triphosphate) and ITP. Seems to function as a house-cleaning enzyme that removes non-canonical purine nucleotides from the nucleotide pool, thus preventing their incorporation into DNA/RNA and avoiding chromosomal lesions. The sequence is that of dITP/XTP pyrophosphatase from Prochlorococcus marinus (strain NATL1A).